Here is a 231-residue protein sequence, read N- to C-terminus: MSESSYGLTTFSPSGRLVQIEYATTAASKGTTALGVKATDGVVIAAEKKTTSPLADSLTLHKVFALDDHVGCTYSGIGPDCRVLVDAARRACQRYRLTYHEPMPISQLVRQISFLFQEFTQSGGVRPFGCSLLVAGADSRGNHLYQLDPSGTFWTWKATSIGKGSPDARTFLEKRYTNEMEIEDAVHTALLTLKEGFDGRMTAENTQVGRVVEGRFELLTVEQLKDYLDQI.

It belongs to the peptidase T1A family. In terms of assembly, the 26S proteasome consists of a 20S proteasome core and two 19S regulatory subunits. The 20S proteasome core is composed of 28 subunits that are arranged in four stacked rings, resulting in a barrel-shaped structure. The two end rings are each formed by seven alpha subunits, and the two central rings are each formed by seven beta subunits. The catalytic chamber with the active sites is on the inside of the barrel.

The protein resides in the cytoplasm. It is found in the nucleus. In terms of biological role, the proteasome is a multicatalytic proteinase complex which is characterized by its ability to cleave peptides with Arg, Phe, Tyr, Leu, and Glu adjacent to the leaving group at neutral or slightly basic pH. The proteasome has an ATP-dependent proteolytic activity. In Trypanosoma brucei brucei, this protein is Proteasome subunit alpha type-2.